The primary structure comprises 913 residues: Probable TonB-dependent receptor HI_1217 (913 aa).

The signal sequence occupies residues 1–27 (MKKAIKLNLITLGLINTIGMTITQAQA). The TBDR plug domain maps to 42-165 (SNDKKPFTEA…LAGSANFRTL (124 aa)). The 738-residue stretch at 176-913 (PFGIILKGMT…TYILSLNYKF (738 aa)) folds into the TBDR beta-barrel domain. Residues 896–913 (LYNFARGRTYILSLNYKF) carry the TonB C-terminal box motif.

Belongs to the TonB-dependent receptor family.

The protein localises to the cell outer membrane. Functionally, probable receptor, TonB-dependent. The protein is Probable TonB-dependent receptor HI_1217 of Haemophilus influenzae (strain ATCC 51907 / DSM 11121 / KW20 / Rd).